We begin with the raw amino-acid sequence, 316 residues long: Aspartate carbamoyltransferase catalytic subunit (316 aa).

Carbamoyl phosphate-binding residues include Arg-66 and Thr-67. Lys-94 is an L-aspartate binding site. Positions 116, 146, and 149 each coordinate carbamoyl phosphate. The L-aspartate site is built by Arg-179 and Arg-234. Residues Gly-275 and Pro-276 each coordinate carbamoyl phosphate.

The protein belongs to the aspartate/ornithine carbamoyltransferase superfamily. ATCase family. As to quaternary structure, heterododecamer (2C3:3R2) of six catalytic PyrB chains organized as two trimers (C3), and six regulatory PyrI chains organized as three dimers (R2).

The catalysed reaction is carbamoyl phosphate + L-aspartate = N-carbamoyl-L-aspartate + phosphate + H(+). Its pathway is pyrimidine metabolism; UMP biosynthesis via de novo pathway; (S)-dihydroorotate from bicarbonate: step 2/3. In terms of biological role, catalyzes the condensation of carbamoyl phosphate and aspartate to form carbamoyl aspartate and inorganic phosphate, the committed step in the de novo pyrimidine nucleotide biosynthesis pathway. This Nitrosomonas eutropha (strain DSM 101675 / C91 / Nm57) protein is Aspartate carbamoyltransferase catalytic subunit.